A 193-amino-acid polypeptide reads, in one-letter code: Xanthine phosphoribosyltransferase (193 aa).

The xanthine site is built by Leu-20 and Asn-27. 129–133 (ANGKA) is a 5-phospho-alpha-D-ribose 1-diphosphate binding site. Xanthine is bound at residue Lys-157.

This sequence belongs to the purine/pyrimidine phosphoribosyltransferase family. Xpt subfamily. Homodimer.

The protein resides in the cytoplasm. It carries out the reaction XMP + diphosphate = xanthine + 5-phospho-alpha-D-ribose 1-diphosphate. It functions in the pathway purine metabolism; XMP biosynthesis via salvage pathway; XMP from xanthine: step 1/1. Converts the preformed base xanthine, a product of nucleic acid breakdown, to xanthosine 5'-monophosphate (XMP), so it can be reused for RNA or DNA synthesis. The chain is Xanthine phosphoribosyltransferase from Bifidobacterium animalis subsp. lactis (strain AD011).